A 257-amino-acid chain; its full sequence is Capsid protein (257 aa).

The Bipartite nuclear localization signal signature appears at 3 to 20; that stretch reads KRNYDTAFSTPMSNVRRR. Residues 41-55 carry the Nuclear localization signal motif; the sequence is KRRRWTNRPMWRKPR. A zinc finger lies at 69-86; it reads CEGPCKVQSFEAKHDISH. Residues 102-123 carry the Nuclear export signal motif; it reads ITHRVGKRFCVKSIWVTGKIWM. Positions 201–248 match the Bipartite nuclear localization signal motif; sequence SKFYRVNNYVVYNHQEAAKYENHTENALLLYMACTHASNPVYATLKIR.

The protein belongs to the geminiviridae capsid protein family. In terms of assembly, homomultimer. Binds to single-stranded and double-stranded viral DNA. Interacts (via nuclear localization signals) with host importin alpha-1a.

The protein localises to the virion. The protein resides in the host nucleus. Encapsidates the viral DNA into characteristic twinned ('geminate') particles. Binds the genomic viral ssDNA and shuttles it into and out of the cell nucleus. The CP of bipartite geminiviruses is not required for cell-to-cell or systemic movement. This chain is Capsid protein, found in Glycine max (Soybean).